A 239-amino-acid polypeptide reads, in one-letter code: Lactate utilization protein A 1 (239 aa).

Belongs to the LutA/YkgE family.

Its function is as follows. Is involved in L-lactate degradation and allows cells to grow with lactate as the sole carbon source. This chain is Lactate utilization protein A 1, found in Bacillus cereus (strain AH820).